Reading from the N-terminus, the 516-residue chain is Katanin p60 ATPase-containing subunit A1 (516 aa).

Positions 75-212 (GFKSEPAAPE…DEKKFDPAGY (138 aa)) are disordered. 2 stretches are compositionally biased toward basic and acidic residues: residues 133-143 (ARKDPPRRSEP) and 155-167 (RGGR…RGDA). Over residues 168 to 178 (RSGGGGRGGAR) the composition is skewed to gly residues. A compositionally biased stretch (basic and acidic residues) spans 179–212 (GSDKDKNRGGKSDKDKKAPSGEEGDEKKFDPAGY). 274–281 (GPPGTGKT) is an ATP binding site.

It belongs to the AAA ATPase family. Katanin p60 subunit A1 subfamily. Can homooligomerize into hexameric rings, which may be promoted by interaction with microtubules. Interacts with KATNB1, which may serve as a targeting subunit.

Its subcellular location is the cytoplasm. The protein localises to the cytoskeleton. It localises to the microtubule organizing center. It is found in the centrosome. The protein resides in the spindle pole. The catalysed reaction is n ATP + n H2O + a microtubule = n ADP + n phosphate + (n+1) alpha/beta tubulin heterodimers.. With respect to regulation, ATPase activity is stimulated by microtubules, which promote homooligomerization. ATP-dependent microtubule severing is stimulated by interaction with KATNB1. Functionally, catalytic subunit of a complex which severs microtubules in an ATP-dependent manner. Microtubule severing may promote rapid reorganization of cellular microtubule arrays and the release of microtubules from the centrosome following nucleation. In mitotic spindles this could allow depolymerization of the microtubule end proximal to the centrosome, and subsequent poleward microtubule flux. This Strongylocentrotus purpuratus (Purple sea urchin) protein is Katanin p60 ATPase-containing subunit A1.